The sequence spans 294 residues: Glyceraldehyde-3-phosphate dehydrogenase (294 aa).

Residues D19, K63, and T105 each contribute to the NAD(+) site. Residues 134 to 136 (SCT), T165, 194 to 195 (TG), and R217 each bind D-glyceraldehyde 3-phosphate. C135 acts as the Nucleophile in catalysis.

It belongs to the glyceraldehyde-3-phosphate dehydrogenase family. Homotetramer.

Its subcellular location is the cytoplasm. The enzyme catalyses D-glyceraldehyde 3-phosphate + phosphate + NAD(+) = (2R)-3-phospho-glyceroyl phosphate + NADH + H(+). It participates in carbohydrate degradation; glycolysis; pyruvate from D-glyceraldehyde 3-phosphate: step 1/5. Catalyzes the oxidative phosphorylation of glyceraldehyde 3-phosphate (G3P) to 1,3-bisphosphoglycerate (BPG) using the cofactor NAD. The first reaction step involves the formation of a hemiacetal intermediate between G3P and a cysteine residue, and this hemiacetal intermediate is then oxidized to a thioester, with concomitant reduction of NAD to NADH. The reduced NADH is then exchanged with the second NAD, and the thioester is attacked by a nucleophilic inorganic phosphate to produce BPG. The polypeptide is Glyceraldehyde-3-phosphate dehydrogenase (gap) (Serratia odorifera).